The sequence spans 846 residues: Envelope glycoprotein gp160 (846 aa).

The signal sequence occupies residues 1-31 (MRAREKERNCQNLWKWGIMLLGMLMTCSAAE). Over 32–674 (DLWVTVYYGV…ITKWLWYIKL (643 aa)) the chain is Extracellular. Cys-53 and Cys-73 form a disulfide bridge. N-linked (GlcNAc...) asparagine; by host glycosylation is found at Asn-87, Asn-129, Asn-151, Asn-179, Asn-182, Asn-229, Asn-236, Asn-257, Asn-271, Asn-284, and Asn-290. 5 disulfides stabilise this stretch: Cys-118–Cys-200, Cys-125–Cys-191, Cys-130–Cys-152, Cys-213–Cys-242, and Cys-223–Cys-234. Residues 130-151 (CTDELRNSKGNGKVEEEEKRKN) are V1. The tract at residues 152-191 (CSFNVRDKREQVYALFYKLDIVPIDNNNRTNSTNYRLINC) is V2. Positions 291-327 (CTRPYKYTRQRTSIGLRQSLYTITGKKKKTGYIGQAH) are V3. Cys-291 and Cys-328 form a disulfide bridge. The N-linked (GlcNAc...) asparagine; by host glycan is linked to Asn-351. Residues 360-370 (SSGGDPEITSH) are CD4-binding loop. Disulfide bonds link Cys-374–Cys-435 and Cys-381–Cys-408. The V4 stretch occupies residues 381–408 (CNTSRLFNSTWNQTNSTGFNNGTVTLPC). N-linked (GlcNAc...) asparagine; by host glycans are attached at residues Asn-382, Asn-388, Asn-392, Asn-395, Asn-401, Asn-438, Asn-451, and Asn-452. V5 stretches follow at residues 450–461 (ANNSSHETIRPG) and 453–461 (SSHETIRPG). The segment at 502-522 (AIGLGAVFLGFLGAAGSTMGA) is fusion peptide. The tract at residues 564-582 (KQLQARVLAVERYLRDQQL) is immunosuppression. A disulfide bridge links Cys-588 with Cys-594. Asn-601, Asn-606, Asn-615, and Asn-627 each carry an N-linked (GlcNAc...) asparagine; by host glycan. Residues 623 to 657 (REIDNYTGLIYSLIEESQIQQEKNEKELLELDKWA) are a coiled coil. The interval 652–673 (ELDKWASLWNWFSITKWLWYIK) is MPER; binding to GalCer. The chain crosses the membrane as a helical span at residues 675-695 (FIMIVGGLIGLRIVFAVLSVV). Residues 696–846 (NRVRQGYSPL…IRQGLERLLL (151 aa)) lie on the Cytoplasmic side of the membrane. Residues 702–705 (YSPL) carry the YXXL motif; contains endocytosis signal motif. S-palmitoyl cysteine; by host attachment occurs at residues Cys-754 and Cys-827. A Di-leucine internalization motif motif is present at residues 845-846 (LL).

The protein belongs to the HIV-1 env protein family. As to quaternary structure, the mature envelope protein (Env) consists of a homotrimer of non-covalently associated gp120-gp41 heterodimers. The resulting complex protrudes from the virus surface as a spike. There seems to be as few as 10 spikes on the average virion. Interacts with host CD4, CCR5 and CXCR4. Gp120 also interacts with the C-type lectins CD209/DC-SIGN and CLEC4M/DC-SIGNR (collectively referred to as DC-SIGN(R)). Gp120 and gp41 interact with GalCer. Gp120 interacts with host ITGA4/ITGB7 complex; on CD4+ T-cells, this interaction results in rapid activation of integrin ITGAL/LFA-1, which facilitates efficient cell-to-cell spreading of HIV-1. Gp120 interacts with cell-associated heparan sulfate; this interaction increases virus infectivity on permissive cells and may be involved in infection of CD4- cells. The mature envelope protein (Env) consists of a homotrimer of non-covalently associated gp120-gp41 heterodimers. The resulting complex protrudes from the virus surface as a spike. There seems to be as few as 10 spikes on the average virion. Post-translationally, highly glycosylated by host. The high number of glycan on the protein is reffered to as 'glycan shield' because it contributes to hide protein sequence from adaptive immune system. In terms of processing, palmitoylation of the transmembrane protein and of Env polyprotein (prior to its proteolytic cleavage) is essential for their association with host cell membrane lipid rafts. Palmitoylation is therefore required for envelope trafficking to classical lipid rafts, but not for viral replication. Specific enzymatic cleavages in vivo yield mature proteins. Envelope glycoproteins are synthesized as an inactive precursor that is heavily N-glycosylated and processed likely by host cell furin in the Golgi to yield the mature SU and TM proteins. The cleavage site between SU and TM requires the minimal sequence [KR]-X-[KR]-R. About 2 of the 9 disulfide bonds of gp41 are reduced by P4HB/PDI, following binding to CD4 receptor.

Its subcellular location is the virion membrane. The protein localises to the host cell membrane. It is found in the host endosome membrane. Its function is as follows. Oligomerizes in the host endoplasmic reticulum into predominantly trimers. In a second time, gp160 transits in the host Golgi, where glycosylation is completed. The precursor is then proteolytically cleaved in the trans-Golgi and thereby activated by cellular furin or furin-like proteases to produce gp120 and gp41. Attaches the virus to the host lymphoid cell by binding to the primary receptor CD4. This interaction induces a structural rearrangement creating a high affinity binding site for a chemokine coreceptor like CXCR4 and/or CCR5. Acts as a ligand for CD209/DC-SIGN and CLEC4M/DC-SIGNR, which are respectively found on dendritic cells (DCs), and on endothelial cells of liver sinusoids and lymph node sinuses. These interactions allow capture of viral particles at mucosal surfaces by these cells and subsequent transmission to permissive cells. HIV subverts the migration properties of dendritic cells to gain access to CD4+ T-cells in lymph nodes. Virus transmission to permissive T-cells occurs either in trans (without DCs infection, through viral capture and transmission), or in cis (following DCs productive infection, through the usual CD4-gp120 interaction), thereby inducing a robust infection. In trans infection, bound virions remain infectious over days and it is proposed that they are not degraded, but protected in non-lysosomal acidic organelles within the DCs close to the cell membrane thus contributing to the viral infectious potential during DCs' migration from the periphery to the lymphoid tissues. On arrival at lymphoid tissues, intact virions recycle back to DCs' cell surface allowing virus transmission to CD4+ T-cells. Functionally, acts as a class I viral fusion protein. Under the current model, the protein has at least 3 conformational states: pre-fusion native state, pre-hairpin intermediate state, and post-fusion hairpin state. During fusion of viral and target intracellular membranes, the coiled coil regions (heptad repeats) assume a trimer-of-hairpins structure, positioning the fusion peptide in close proximity to the C-terminal region of the ectodomain. The formation of this structure appears to drive apposition and subsequent fusion of viral and target cell membranes. Complete fusion occurs in host cell endosomes and is dynamin-dependent, however some lipid transfer might occur at the plasma membrane. The virus undergoes clathrin-dependent internalization long before endosomal fusion, thus minimizing the surface exposure of conserved viral epitopes during fusion and reducing the efficacy of inhibitors targeting these epitopes. Membranes fusion leads to delivery of the nucleocapsid into the cytoplasm. In Human immunodeficiency virus type 1 group M subtype D (isolate NDK) (HIV-1), this protein is Envelope glycoprotein gp160.